Consider the following 218-residue polypeptide: DNA-directed RNA polymerase III subunit RPC7-like (218 aa).

A disordered region spans residues 133-218; that stretch reads LPKRPPKTTE…SDDNMDEAIY (86 aa). Residues 139–160 are compositionally biased toward basic and acidic residues; sequence KTTEDKEETIQKLETLEKKEEE. 2 stretches are compositionally biased toward acidic residues: residues 161 to 193 and 201 to 218; these read VTSE…EETD and NGED…EAIY.

The protein belongs to the eukaryotic RPC7 RNA polymerase subunit family. Component of the RNA polymerase III (Pol III) complex consisting of 17 subunits. Pol III exists as two alternative complexes defined by the mutually exclusive incorporation of subunit POLR3G/RPC7alpha or POLR3GL/RPC7beta. Found in a trimeric complex with POLR3C/RPC3 and POLR3F/RPC6. Directly interacts with POLR3C. In terms of tissue distribution, widely expressed. Expressed in CD4-positive T cells.

The protein localises to the nucleus. Its function is as follows. DNA-dependent RNA polymerase catalyzes the transcription of DNA into RNA using the four ribonucleoside triphosphates as substrates. Specific peripheric component of RNA polymerase III which synthesizes small RNAs, such as 5S rRNA and tRNAs. This is DNA-directed RNA polymerase III subunit RPC7-like from Homo sapiens (Human).